The chain runs to 69 residues: MSVLTPLLLRGLTGSARRLPVPRAKIHSLPPDEKLGIMELAVGLTSCFVTFLLPAGWILSHLETYRRPE.

The N-terminal 25 residues, 1-25 (MSVLTPLLLRGLTGSARRLPVPRAK), are a transit peptide targeting the mitochondrion. Positions 2–19 (SVLTPLLLRGLTGSARRL) match the SIFI-degron motif. The Mitochondrial matrix segment spans residues 26–36 (IHSLPPDEKLG). The helical transmembrane segment at 37 to 60 (IMELAVGLTSCFVTFLLPAGWILS) threads the bilayer. The Mitochondrial intermembrane portion of the chain corresponds to 61-69 (HLETYRRPE).

This sequence belongs to the cytochrome c oxidase VIII family. In terms of assembly, component of the cytochrome c oxidase (complex IV, CIV), a multisubunit enzyme composed of 14 subunits. The complex is composed of a catalytic core of 3 subunits MT-CO1, MT-CO2 and MT-CO3, encoded in the mitochondrial DNA, and 11 supernumerary subunits COX4I, COX5A, COX5B, COX6A, COX6B, COX6C, COX7A, COX7B, COX7C, COX8 and NDUFA4, which are encoded in the nuclear genome. The complex exists as a monomer or a dimer and forms supercomplexes (SCs) in the inner mitochondrial membrane with NADH-ubiquinone oxidoreductase (complex I, CI) and ubiquinol-cytochrome c oxidoreductase (cytochrome b-c1 complex, complex III, CIII), resulting in different assemblies (supercomplex SCI(1)III(2)IV(1) and megacomplex MCI(2)III(2)IV(2)). In terms of processing, in response to mitochondrial stress, the precursor protein is ubiquitinated by the SIFI complex in the cytoplasm before mitochondrial import, leading to its degradation. Within the SIFI complex, UBR4 initiates ubiquitin chain that are further elongated or branched by KCMF1.

It is found in the mitochondrion inner membrane. It functions in the pathway energy metabolism; oxidative phosphorylation. Its function is as follows. Component of the cytochrome c oxidase, the last enzyme in the mitochondrial electron transport chain which drives oxidative phosphorylation. The respiratory chain contains 3 multisubunit complexes succinate dehydrogenase (complex II, CII), ubiquinol-cytochrome c oxidoreductase (cytochrome b-c1 complex, complex III, CIII) and cytochrome c oxidase (complex IV, CIV), that cooperate to transfer electrons derived from NADH and succinate to molecular oxygen, creating an electrochemical gradient over the inner membrane that drives transmembrane transport and the ATP synthase. Cytochrome c oxidase is the component of the respiratory chain that catalyzes the reduction of oxygen to water. Electrons originating from reduced cytochrome c in the intermembrane space (IMS) are transferred via the dinuclear copper A center (CU(A)) of subunit 2 and heme A of subunit 1 to the active site in subunit 1, a binuclear center (BNC) formed by heme A3 and copper B (CU(B)). The BNC reduces molecular oxygen to 2 water molecules using 4 electrons from cytochrome c in the IMS and 4 protons from the mitochondrial matrix. In Gorilla gorilla gorilla (Western lowland gorilla), this protein is Cytochrome c oxidase subunit 8A, mitochondrial (COX8A).